Here is a 212-residue protein sequence, read N- to C-terminus: Pyridoxine/pyridoxamine 5'-phosphate oxidase (212 aa).

Substrate-binding positions include 8–11 (RREY) and Lys66. FMN is bound by residues 61-66 (RIVLLK), 76-77 (FT), Arg82, Lys83, and Gln105. Residues Tyr123, Arg127, and Ser131 each coordinate substrate. Residues 140 to 141 (QS) and Trp185 each bind FMN. Residue 191-193 (RLH) coordinates substrate. Arg195 serves as a coordination point for FMN.

It belongs to the pyridoxamine 5'-phosphate oxidase family. In terms of assembly, homodimer. FMN is required as a cofactor.

The enzyme catalyses pyridoxamine 5'-phosphate + O2 + H2O = pyridoxal 5'-phosphate + H2O2 + NH4(+). It catalyses the reaction pyridoxine 5'-phosphate + O2 = pyridoxal 5'-phosphate + H2O2. The protein operates within cofactor metabolism; pyridoxal 5'-phosphate salvage; pyridoxal 5'-phosphate from pyridoxamine 5'-phosphate: step 1/1. It functions in the pathway cofactor metabolism; pyridoxal 5'-phosphate salvage; pyridoxal 5'-phosphate from pyridoxine 5'-phosphate: step 1/1. Its function is as follows. Catalyzes the oxidation of either pyridoxine 5'-phosphate (PNP) or pyridoxamine 5'-phosphate (PMP) into pyridoxal 5'-phosphate (PLP). In Shewanella sp. (strain ANA-3), this protein is Pyridoxine/pyridoxamine 5'-phosphate oxidase.